A 598-amino-acid chain; its full sequence is DNA primase (598 aa).

The CHC2-type zinc finger occupies 38–62; it reads CPFHDEKTPSFTVSEDKQICHCFGC. The region spanning 260 to 341 is the Toprim domain; that stretch reads DEIILLEGFM…NVYVVQLPSG (82 aa). Mg(2+) is bound by residues glutamate 266, aspartate 310, and aspartate 312.

The protein belongs to the DnaG primase family. In terms of assembly, monomer. Interacts with DnaB. Zn(2+) is required as a cofactor. Requires Mg(2+) as cofactor.

It carries out the reaction ssDNA + n NTP = ssDNA/pppN(pN)n-1 hybrid + (n-1) diphosphate.. Its function is as follows. RNA polymerase that catalyzes the synthesis of short RNA molecules used as primers for DNA polymerase during DNA replication. The protein is DNA primase of Staphylococcus epidermidis (strain ATCC 12228 / FDA PCI 1200).